A 637-amino-acid polypeptide reads, in one-letter code: Threonine--tRNA ligase (637 aa).

The TGS domain maps to 1-61; the sequence is MPVITLPNGS…EQDAALSIVT (61 aa). The segment at 242-533 is catalytic; sequence DHRKLGKKFD…LIENYEGAFP (292 aa). Zn(2+) is bound by residues Cys-333, His-384, and His-510.

The protein belongs to the class-II aminoacyl-tRNA synthetase family. Homodimer. Requires Zn(2+) as cofactor.

It is found in the cytoplasm. The catalysed reaction is tRNA(Thr) + L-threonine + ATP = L-threonyl-tRNA(Thr) + AMP + diphosphate + H(+). In terms of biological role, catalyzes the attachment of threonine to tRNA(Thr) in a two-step reaction: L-threonine is first activated by ATP to form Thr-AMP and then transferred to the acceptor end of tRNA(Thr). Also edits incorrectly charged L-seryl-tRNA(Thr). This is Threonine--tRNA ligase from Teredinibacter turnerae (strain ATCC 39867 / T7901).